Reading from the N-terminus, the 847-residue chain is Protein SEY1 (847 aa).

Over 1-720 (MSSGEPLSET…KRSIVQHVTQ (720 aa)) the chain is Cytoplasmic. Positions 55–290 (GHNYHIVAVF…VENDIFKPEY (236 aa)) constitute a GB1/RHD3-type G domain. 65–72 (GSQSTGKS) contributes to the GTP binding site. Residues 721–741 (IPYYIYIIILLLGWNEFMAVV) form a helical membrane-spanning segment. At 742 to 744 (RNP) the chain is on the lumenal side. Residues 745-765 (FTFSLAIILGASLYILYTMNL) traverse the membrane as a helical segment. Residues 766–847 (LKPALTVTQR…VTSLNVVEEE (82 aa)) lie on the Cytoplasmic side of the membrane.

This sequence belongs to the TRAFAC class dynamin-like GTPase superfamily. GB1/RHD3 GTPase family. RHD3 subfamily.

It localises to the endoplasmic reticulum membrane. Cooperates with the reticulon proteins and tubule-shaping DP1 family proteins to generate and maintain the structure of the tubular endoplasmic reticulum network. Has GTPase activity, which is required for its function in ER organization. In Lodderomyces elongisporus (strain ATCC 11503 / CBS 2605 / JCM 1781 / NBRC 1676 / NRRL YB-4239) (Yeast), this protein is Protein SEY1.